A 146-amino-acid chain; its full sequence is MLSFQHTKILPYKPKKLFDLVWDIKSYPQFLPWCAAARIISENNQEVISELVIQLKGLSEKYNSRVINTITDNGIYLIDTVAISGPFEYLKSTWQFIPHSTGTELKFFINFKMTSVILDKLIGSYFTIATEKMILAFEKRAKEVIK.

This sequence belongs to the ribosome association toxin RatA family.

Functionally, toxic component of a type II toxin-antitoxin (TA) system. Binds to 50S ribosomal subunits, preventing them from associating with 30S subunits to form 70S ribosomes. Its antitoxin is unknown. This Rickettsia prowazekii (strain Madrid E) protein is Ribosome association toxin RatA (ratA).